Consider the following 205-residue polypeptide: Outer-membrane lipoprotein carrier protein (205 aa).

Residues 1-22 form the signal peptide; it reads MKKIVIVISILLTSFLSSAVSA.

It belongs to the LolA family. As to quaternary structure, monomer.

Its subcellular location is the periplasm. Its function is as follows. Participates in the translocation of lipoproteins from the inner membrane to the outer membrane. Only forms a complex with a lipoprotein if the residue after the N-terminal Cys is not an aspartate (The Asp acts as a targeting signal to indicate that the lipoprotein should stay in the inner membrane). The chain is Outer-membrane lipoprotein carrier protein from Psychromonas ingrahamii (strain DSM 17664 / CCUG 51855 / 37).